Reading from the N-terminus, the 156-residue chain is Endoribonuclease YbeY (156 aa).

3 residues coordinate Zn(2+): H122, H126, and H132.

It belongs to the endoribonuclease YbeY family. Zn(2+) is required as a cofactor.

Its subcellular location is the cytoplasm. Its function is as follows. Single strand-specific metallo-endoribonuclease involved in late-stage 70S ribosome quality control and in maturation of the 3' terminus of the 16S rRNA. This chain is Endoribonuclease YbeY, found in Pediococcus pentosaceus (strain ATCC 25745 / CCUG 21536 / LMG 10740 / 183-1w).